A 445-amino-acid chain; its full sequence is MSTILESLPTGQKVGIAFSGGLDTSAALHWMKLKGAVPYAYTANLGQPDEDDYDAIPKRAIEYGAAGARLIDCRAQLVAEGIAALQSGAFHITTAGVTYFNTTPIGRAVTGTMLVAAMKEDGVNIWGDGSTYKGNDIERFYRYGLLVNPDLKIYKPWLDQTFIDELGGRAEMSEFMNQAGFAYKMSAEKAYSTDSNLLGATHEAKDLESLESGIKIVNPIMGVAFWRDDVKIAAEEVTVRFEAGQPVALNGVEFNDQVELLLEANRIGGRHGLGMSDQIENRIIEAKSRGIYEAPGLALLYIAYERLVTGIHNEDTIEQYRENGRRLGRLLYQGRWFDPQAIMLRETAQRWVARAITGEVKIELRRGNDYSILSTKSPNLTYQPERLSMEKVASTFSPRDRIGQLTMRNLDITDTRDKLRVYSQVGLLTPGEASALPQIKGDGDK.

Residues 17 to 25 and alanine 43 each bind ATP; that span reads AFSGGLDTS. L-citrulline is bound at residue tyrosine 99. Positions 129 and 131 each coordinate ATP. L-aspartate-binding residues include threonine 131, asparagine 135, and aspartate 136. Asparagine 135 is a binding site for L-citrulline. ATP is bound at residue aspartate 136. 2 residues coordinate L-citrulline: arginine 139 and serine 192. Aspartate 194 contributes to the ATP binding site. Threonine 201, glutamate 203, and glutamate 280 together coordinate L-citrulline.

Belongs to the argininosuccinate synthase family. Type 2 subfamily. In terms of assembly, homotetramer.

The protein localises to the cytoplasm. It catalyses the reaction L-citrulline + L-aspartate + ATP = 2-(N(omega)-L-arginino)succinate + AMP + diphosphate + H(+). It functions in the pathway amino-acid biosynthesis; L-arginine biosynthesis; L-arginine from L-ornithine and carbamoyl phosphate: step 2/3. This Burkholderia cenocepacia (strain ATCC BAA-245 / DSM 16553 / LMG 16656 / NCTC 13227 / J2315 / CF5610) (Burkholderia cepacia (strain J2315)) protein is Argininosuccinate synthase.